The primary structure comprises 418 residues: Glutamyl-tRNA reductase (418 aa).

Substrate contacts are provided by residues Thr-49 to Arg-52, Ser-108, Glu-113 to Gln-115, and Gln-119. Cys-50 functions as the Nucleophile in the catalytic mechanism. NADP(+) is bound at residue Gly-188–Ile-193.

The protein belongs to the glutamyl-tRNA reductase family. Homodimer.

The catalysed reaction is (S)-4-amino-5-oxopentanoate + tRNA(Glu) + NADP(+) = L-glutamyl-tRNA(Glu) + NADPH + H(+). Its pathway is porphyrin-containing compound metabolism; protoporphyrin-IX biosynthesis; 5-aminolevulinate from L-glutamyl-tRNA(Glu): step 1/2. Its function is as follows. Catalyzes the NADPH-dependent reduction of glutamyl-tRNA(Glu) to glutamate 1-semialdehyde (GSA). This Aliivibrio fischeri (strain ATCC 700601 / ES114) (Vibrio fischeri) protein is Glutamyl-tRNA reductase.